A 367-amino-acid polypeptide reads, in one-letter code: tRNA-specific 2-thiouridylase MnmA (367 aa).

ATP-binding positions include 12–19 (GMSGGVDS) and methionine 38. The interaction with target base in tRNA stretch occupies residues 98–100 (NPD). The active-site Nucleophile is the cysteine 103. A disulfide bridge connects residues cysteine 103 and cysteine 200. Residue glycine 128 participates in ATP binding. An interaction with tRNA region spans residues 150–152 (KDQ). Cysteine 200 acts as the Cysteine persulfide intermediate in catalysis. Positions 312–313 (RY) are interaction with tRNA.

This sequence belongs to the MnmA/TRMU family.

It localises to the cytoplasm. It carries out the reaction S-sulfanyl-L-cysteinyl-[protein] + uridine(34) in tRNA + AH2 + ATP = 2-thiouridine(34) in tRNA + L-cysteinyl-[protein] + A + AMP + diphosphate + H(+). Functionally, catalyzes the 2-thiolation of uridine at the wobble position (U34) of tRNA, leading to the formation of s(2)U34. This chain is tRNA-specific 2-thiouridylase MnmA, found in Psychromonas ingrahamii (strain DSM 17664 / CCUG 51855 / 37).